Consider the following 471-residue polypeptide: Trigger factor (471 aa).

Positions 165–244 (GDFVSIDLRA…VQSVKERVLP (80 aa)) constitute a PPIase FKBP-type domain. Positions 407-471 (VTDASGNPVD…EATAEDPAKS (65 aa)) are disordered. Acidic residues predominate over residues 416–443 (DLEELVGGTEEDDVTEDATEDVTEDAAP).

It belongs to the FKBP-type PPIase family. Tig subfamily.

The protein localises to the cytoplasm. The catalysed reaction is [protein]-peptidylproline (omega=180) = [protein]-peptidylproline (omega=0). Involved in protein export. Acts as a chaperone by maintaining the newly synthesized protein in an open conformation. Functions as a peptidyl-prolyl cis-trans isomerase. In Kineococcus radiotolerans (strain ATCC BAA-149 / DSM 14245 / SRS30216), this protein is Trigger factor.